A 458-amino-acid polypeptide reads, in one-letter code: UDP-N-acetylmuramoylalanine--D-glutamate ligase (458 aa).

119–125 (GSNGKTT) contributes to the ATP binding site.

The protein belongs to the MurCDEF family.

The protein localises to the cytoplasm. The catalysed reaction is UDP-N-acetyl-alpha-D-muramoyl-L-alanine + D-glutamate + ATP = UDP-N-acetyl-alpha-D-muramoyl-L-alanyl-D-glutamate + ADP + phosphate + H(+). It participates in cell wall biogenesis; peptidoglycan biosynthesis. In terms of biological role, cell wall formation. Catalyzes the addition of glutamate to the nucleotide precursor UDP-N-acetylmuramoyl-L-alanine (UMA). In Limosilactobacillus fermentum (strain NBRC 3956 / LMG 18251) (Lactobacillus fermentum), this protein is UDP-N-acetylmuramoylalanine--D-glutamate ligase.